The primary structure comprises 688 residues: Envelope glycoprotein gp70 (688 aa).

Over residues M1–L15 the composition is skewed to polar residues. The tract at residues M1 to K31 is disordered. An N-terminal signal peptide occupies residues M1–G98. Positions K20–K31 are enriched in basic residues. At E99 to Y624 the chain is on the extracellular side. N-linked (GlcNAc...) asparagine; by host glycosylation is found at N127 and N143. Residues L426–S474 adopt a coiled-coil conformation. The propeptide occupies K455–R456. Positions F457 to V477 are fusion peptide. Residues L463–A481 are immunosuppression. N498 carries N-linked (GlcNAc...) asparagine; by host glycosylation. Residues L511–R541 are a coiled coil. The N-linked (GlcNAc...) asparagine; by host glycan is linked to N557. The chain crosses the membrane as a helical span at residues F625–V645. At F646–T688 the chain is on the cytoplasmic side.

As to quaternary structure, the mature envelope protein (Env) consists of a trimer of SU-TM heterodimers attached by noncovalent interactions or by a labile interchain disulfide bond. In terms of processing, specific enzymatic cleavages in vivo yield mature proteins. Envelope glycoproteins are synthesized as an inactive precursor that is N-glycosylated and processed likely by host cell furin or by a furin-like protease in the Golgi to yield the mature SU and TM proteins. The cleavage site between SU and TM requires the minimal sequence [KR]-X-[KR]-R.

The protein localises to the virion membrane. It localises to the host cell membrane. In terms of biological role, the surface protein (SU) attaches the virus to the host cell by binding to its receptor. This interaction triggers the refolding of the transmembrane protein (TM) and is thought to activate its fusogenic potential by unmasking its fusion peptide. Fusion occurs at the host cell plasma membrane. The transmembrane protein (TM) acts as a class I viral fusion protein. Under the current model, the protein has at least 3 conformational states: pre-fusion native state, pre-hairpin intermediate state, and post-fusion hairpin state. During viral and target cell membrane fusion, the coiled coil regions (heptad repeats) assume a trimer-of-hairpins structure, positioning the fusion peptide in close proximity to the C-terminal region of the ectodomain. The formation of this structure appears to drive apposition and subsequent fusion of viral and target cell membranes. Membranes fusion leads to delivery of the nucleocapsid into the cytoplasm. In Mus musculus (Mouse), this protein is Envelope glycoprotein gp70 (env).